A 132-amino-acid chain; its full sequence is Small ribosomal subunit protein uS19 (132 aa).

Belongs to the universal ribosomal protein uS19 family. In terms of assembly, part of the 30S ribosomal subunit.

Protein S19 forms a complex with S13 that binds strongly to the 16S ribosomal RNA. The protein is Small ribosomal subunit protein uS19 of Pyrococcus furiosus (strain ATCC 43587 / DSM 3638 / JCM 8422 / Vc1).